The primary structure comprises 405 residues: Serpin B12 (405 aa).

The interval 64-83 (SQNESKEPDPCLKSNKQKAG) is disordered.

This sequence belongs to the serpin family. Ov-serpin subfamily. As to quaternary structure, interacts with SLFN12; as part of a pathway regulating cell differentiation. May interact with USP14. In terms of tissue distribution, expressed in many tissues, including brain, bone marrow, lymph node, heart, lung, liver, pancreas, testis, ovary, and intestine.

The protein localises to the cytoplasm. In terms of biological role, inhibits trypsin and plasmin, but not thrombin, coagulation factor Xa, or urokinase-type plasminogen activator. May play a role in cell differentiation. This chain is Serpin B12 (SERPINB12), found in Homo sapiens (Human).